The following is a 334-amino-acid chain: Cytosolic Fe-S cluster assembly factor NBP35 (334 aa).

[4Fe-4S] cluster-binding residues include Cys-33, Cys-47, Cys-50, and Cys-56. Residue 86–93 (GKGGVGKS) participates in ATP binding. [4Fe-4S] cluster contacts are provided by Cys-259 and Cys-262.

It belongs to the Mrp/NBP35 ATP-binding proteins family. NUBP1/NBP35 subfamily. Heterotetramer of 2 NBP35 and 2 CFD1 chains. [4Fe-4S] cluster is required as a cofactor.

The protein localises to the cytoplasm. Its subcellular location is the nucleus. Functionally, component of the cytosolic iron-sulfur (Fe/S) protein assembly (CIA) machinery. Required for maturation of extramitochondrial Fe-S proteins. The NBP35-CFD1 heterotetramer forms a Fe-S scaffold complex, mediating the de novo assembly of an Fe-S cluster and its transfer to target apoproteins. Required for biogenesis and export of both ribosomal subunits, which may reflect a role in assembly of the Fe/S clusters in RLI1, a protein which performs rRNA processing and ribosome export. The sequence is that of Cytosolic Fe-S cluster assembly factor NBP35 from Candida glabrata (strain ATCC 2001 / BCRC 20586 / JCM 3761 / NBRC 0622 / NRRL Y-65 / CBS 138) (Yeast).